The sequence spans 447 residues: DNA primase DnaG (447 aa).

Positions 200 to 274 constitute a Toprim domain; sequence DSIIVVEGRA…DIDYVARAPE (75 aa). 3 residues coordinate Mg(2+): Glu-206, Asp-248, and Asp-250.

The protein belongs to the archaeal DnaG primase family. As to quaternary structure, forms a ternary complex with MCM helicase and DNA. Component of the archaeal exosome complex. Requires Mg(2+) as cofactor.

The enzyme catalyses ssDNA + n NTP = ssDNA/pppN(pN)n-1 hybrid + (n-1) diphosphate.. Its function is as follows. RNA polymerase that catalyzes the synthesis of short RNA molecules used as primers for DNA polymerase during DNA replication. Also part of the exosome, which is a complex involved in RNA degradation. Acts as a poly(A)-binding protein that enhances the interaction between heteromeric, adenine-rich transcripts and the exosome. This Pyrococcus horikoshii (strain ATCC 700860 / DSM 12428 / JCM 9974 / NBRC 100139 / OT-3) protein is DNA primase DnaG.